Consider the following 183-residue polypeptide: Negative modulator of initiation of replication (183 aa).

The disordered stretch occupies residues 43-70; the sequence is VNDTQPVSAPAPSKAAPSAGNESRPQDR. Positions 50–61 are enriched in low complexity; that stretch reads SAPAPSKAAPSA. Interaction with DNA stretches follow at residues 89-90, 118-122, and 152-158; these read AV, RTRIY, and NTNTGRK.

This sequence belongs to the SeqA family. Homodimer. Polymerizes to form helical filaments.

The protein resides in the cytoplasm. Negative regulator of replication initiation, which contributes to regulation of DNA replication and ensures that replication initiation occurs exactly once per chromosome per cell cycle. Binds to pairs of hemimethylated GATC sequences in the oriC region, thus preventing assembly of replication proteins and re-initiation at newly replicated origins. Repression is relieved when the region becomes fully methylated. The polypeptide is Negative modulator of initiation of replication (Pantoea ananatis (strain AJ13355)).